Here is a 130-residue protein sequence, read N- to C-terminus: Large ribosomal subunit protein bL17 (130 aa).

This sequence belongs to the bacterial ribosomal protein bL17 family. In terms of assembly, part of the 50S ribosomal subunit. Contacts protein L32.

This Pectobacterium atrosepticum (strain SCRI 1043 / ATCC BAA-672) (Erwinia carotovora subsp. atroseptica) protein is Large ribosomal subunit protein bL17.